The sequence spans 616 residues: MALLQISEPGLTAAPHQRRLAAGIDLGTTNSLVATVRSGKAQTLADEQLRDLLPSVVHYQQNNIDVGWNARDLAALDPVNTISSVKRMMGRSLADIVQRYPNLPYQFQPSENGLPMIQTASGLVNPVQVSADILKALAQRARAALEGELDGVVITVPAYFDDAQRQGTKDAARLAGLHVLRLLNEPTAAAIAYGLDSGQEGVIAVYDLGGGTFDISILRLSRGVFEVLATGGDSALGGDDFDHLLADWLREQAGIDSRDDHGVQRQLLDAAIAAKITLSDAEVADVSVAGWQGQITREQFESLIVSLVKRTLMACRRALKDAGVTADEVLEVVMVGGSTRVPLVREQVGQFFGRTPLTSIDPDKVVAIGAAIQADILVGNKPDSDMLLLDVIPLSLGLETMGGLVEKVIPRNTTIPVARAQEFTTFKDGQSAMTIHVLQGERELVQDCRSLARFALRGLPPLPAGGAHIRVTFQVDADGLLSVTAMEKSTGVEASIQVKPSYGLSDDEIANMIKDSMANAQSDIGARKLAEQQVEASRVLESLQGALAEDAALLSEQESTAIAQAMAALQQQMQGTDPHAIEAAIKALDAQTQDFAARRMDASIRRALAGHSVDEV.

Belongs to the heat shock protein 70 family.

Its function is as follows. Chaperone involved in the maturation of iron-sulfur cluster-containing proteins. Has a low intrinsic ATPase activity which is markedly stimulated by HscB. Involved in the maturation of IscU. This Yersinia enterocolitica serotype O:8 / biotype 1B (strain NCTC 13174 / 8081) protein is Chaperone protein HscA.